We begin with the raw amino-acid sequence, 324 residues long: Acetyl-coenzyme A carboxylase carboxyl transferase subunit alpha (324 aa).

The CoA carboxyltransferase C-terminal domain occupies 42–296 (RLSELEEEVY…EKALTRLAEK (255 aa)).

It belongs to the AccA family. As to quaternary structure, acetyl-CoA carboxylase is a heterohexamer composed of biotin carboxyl carrier protein (AccB), biotin carboxylase (AccC) and two subunits each of ACCase subunit alpha (AccA) and ACCase subunit beta (AccD).

The protein localises to the cytoplasm. It carries out the reaction N(6)-carboxybiotinyl-L-lysyl-[protein] + acetyl-CoA = N(6)-biotinyl-L-lysyl-[protein] + malonyl-CoA. It functions in the pathway lipid metabolism; malonyl-CoA biosynthesis; malonyl-CoA from acetyl-CoA: step 1/1. In terms of biological role, component of the acetyl coenzyme A carboxylase (ACC) complex. First, biotin carboxylase catalyzes the carboxylation of biotin on its carrier protein (BCCP) and then the CO(2) group is transferred by the carboxyltransferase to acetyl-CoA to form malonyl-CoA. The polypeptide is Acetyl-coenzyme A carboxylase carboxyl transferase subunit alpha (Shouchella clausii (strain KSM-K16) (Alkalihalobacillus clausii)).